Here is a 466-residue protein sequence, read N- to C-terminus: UDP-N-acetylmuramoylalanine--D-glutamate ligase (466 aa).

An ATP-binding site is contributed by 128–134 (GTNGKST).

Belongs to the MurCDEF family.

The protein resides in the cytoplasm. The catalysed reaction is UDP-N-acetyl-alpha-D-muramoyl-L-alanine + D-glutamate + ATP = UDP-N-acetyl-alpha-D-muramoyl-L-alanyl-D-glutamate + ADP + phosphate + H(+). It participates in cell wall biogenesis; peptidoglycan biosynthesis. Cell wall formation. Catalyzes the addition of glutamate to the nucleotide precursor UDP-N-acetylmuramoyl-L-alanine (UMA). In Bartonella henselae (strain ATCC 49882 / DSM 28221 / CCUG 30454 / Houston 1) (Rochalimaea henselae), this protein is UDP-N-acetylmuramoylalanine--D-glutamate ligase.